The following is a 303-amino-acid chain: MINSKLKNRNLNQVNVFNFSELFKLMKPRVMSLVIFTCAVGLLMAPSTVSTKDAMIAILLVSIGAGAAGALNMWYESDLDALMTRTCLRPIPMGKVNKNQALIFGTSLSFFSVIALDYFANTISAVLLLFTILFYVFVYTIWLKRKTPQNIVIGGAAGALPPVIGWTIATNSLSLEPITFFLIIFFWTPSHFWALSLYKSDDYKKAKIPMLPLTNGIESTKINILVYSLLMLPMVILPYAIDFVGLVFLVPALMLTLYYNILCFELYKFKINKFNPKKAKTIFGYSILYLFLIFVIFLIDKIL.

Helical transmembrane passes span 30–50 (VMSL…STVS), 54–74 (AMIA…LNMW), 101–121 (ALIF…YFAN), 123–143 (ISAV…TIWL), 150–170 (NIVI…TIAT), 178–198 (ITFF…LSLY), 219–241 (STKI…PYAI), 245–262 (GLVF…YNIL), and 279–299 (AKTI…IFLI).

This sequence belongs to the UbiA prenyltransferase family. Protoheme IX farnesyltransferase subfamily.

Its subcellular location is the cell inner membrane. It carries out the reaction heme b + (2E,6E)-farnesyl diphosphate + H2O = Fe(II)-heme o + diphosphate. It functions in the pathway porphyrin-containing compound metabolism; heme O biosynthesis; heme O from protoheme: step 1/1. In terms of biological role, converts heme B (protoheme IX) to heme O by substitution of the vinyl group on carbon 2 of heme B porphyrin ring with a hydroxyethyl farnesyl side group. The sequence is that of Protoheme IX farnesyltransferase from Pelagibacter ubique (strain HTCC1062).